Here is a 682-residue protein sequence, read N- to C-terminus: Two-component system protein A (682 aa).

The tract at residues 11–41 is disordered; it reads SLDDNDNGQQHQDEVQAKHQDQGHTCPSRPS. Basic and acidic residues predominate over residues 21–32; that stretch reads HQDEVQAKHQDQ. 2 consecutive PAS domains span residues 45–105 and 166–239; these read LSRI…PILY and MNET…LREG. Residues 241 to 292 form the PAC domain; the sequence is IEDEGWRYRRDGSRFWANVLITPIYQFGQHVGFVKVTRDLTERKEAEACMIA. The Histidine kinase domain maps to 307-530; that stretch reads NISHEIRTPM…VFWFTAKMGG (224 aa). His310 is modified (phosphohistidine; by autocatalysis). The Response regulatory domain maps to 563-680; sequence HVLLVEDNIV…QLLRVLWKWF (118 aa). A 4-aspartylphosphate modification is found at Asp615.

Activation probably requires a transfer of a phosphate group between a His in the histidine kinase domain and an Asp of the response regulatory domain.

The protein localises to the cytoplasm. The enzyme catalyses ATP + protein L-histidine = ADP + protein N-phospho-L-histidine.. Functionally, may be part of a two-component regulatory system required for formation of conidia on certain growth media. The protein is Two-component system protein A of Emericella nidulans (strain FGSC A4 / ATCC 38163 / CBS 112.46 / NRRL 194 / M139) (Aspergillus nidulans).